The primary structure comprises 132 residues: Small ribosomal subunit protein uS13 (132 aa).

Residues Arg-101–Ala-125 show a composition bias toward basic residues. The segment at Arg-101–Arg-132 is disordered.

It belongs to the universal ribosomal protein uS13 family. As to quaternary structure, part of the 30S ribosomal subunit. Forms a loose heterodimer with protein S19. Forms two bridges to the 50S subunit in the 70S ribosome.

Located at the top of the head of the 30S subunit, it contacts several helices of the 16S rRNA. In the 70S ribosome it contacts the 23S rRNA (bridge B1a) and protein L5 of the 50S subunit (bridge B1b), connecting the 2 subunits; these bridges are implicated in subunit movement. Contacts the tRNAs in the A and P-sites. In Ureaplasma urealyticum serovar 10 (strain ATCC 33699 / Western), this protein is Small ribosomal subunit protein uS13.